The sequence spans 500 residues: Probable cytosol aminopeptidase (500 aa).

Mn(2+) contacts are provided by K264 and D269. K276 is an active-site residue. D287, D346, and E348 together coordinate Mn(2+). Residue R350 is part of the active site.

The protein belongs to the peptidase M17 family. Mn(2+) is required as a cofactor.

The protein resides in the cytoplasm. The catalysed reaction is Release of an N-terminal amino acid, Xaa-|-Yaa-, in which Xaa is preferably Leu, but may be other amino acids including Pro although not Arg or Lys, and Yaa may be Pro. Amino acid amides and methyl esters are also readily hydrolyzed, but rates on arylamides are exceedingly low.. It carries out the reaction Release of an N-terminal amino acid, preferentially leucine, but not glutamic or aspartic acids.. Functionally, presumably involved in the processing and regular turnover of intracellular proteins. Catalyzes the removal of unsubstituted N-terminal amino acids from various peptides. The chain is Probable cytosol aminopeptidase from Rhodopseudomonas palustris (strain BisB5).